Reading from the N-terminus, the 140-residue chain is 3-hydroxyacyl-[acyl-carrier-protein] dehydratase FabZ (140 aa).

Residue histidine 48 is part of the active site.

The protein belongs to the thioester dehydratase family. FabZ subfamily.

It is found in the cytoplasm. It carries out the reaction a (3R)-hydroxyacyl-[ACP] = a (2E)-enoyl-[ACP] + H2O. Its function is as follows. Involved in unsaturated fatty acids biosynthesis. Catalyzes the dehydration of short chain beta-hydroxyacyl-ACPs and long chain saturated and unsaturated beta-hydroxyacyl-ACPs. This Exiguobacterium sibiricum (strain DSM 17290 / CCUG 55495 / CIP 109462 / JCM 13490 / 255-15) protein is 3-hydroxyacyl-[acyl-carrier-protein] dehydratase FabZ.